The sequence spans 314 residues: MDKKSRVLIVGGTGFIGKRIVKASLALGHPTYVLFRPEALSYIDKVQMLISFKQLGAKLLEASLDDHQGLVDVVKQVDVVISAVSGGLVRHHILDQLKLVEAIKEAGNIKRFLPSEFGMDPDVVEDPLEPGNITFIDKRKVRRAIEAATIPYTYVSSNMFAGFFAGSLAQLQDAPRMMPARDKVLIYGDGNVKGVYVDEDDAGIYIVKSIDDPRTLNKTVYIRPPMNILSQKEVVEIWERLSGLSLEKIYVSEDQLLNMKDKSYVEKMARCHLYHFFIKGDLYNFEIGPNATEGTKLYPEVKYTTMDSYMERYL.

NADP(+) is bound by residues 11-17 (GGTGFIG), Arg-36, and Lys-45. The active-site Proton acceptor is the Lys-138. Arg-142 provides a ligand contact to NADP(+). A substrate-binding site is contributed by His-272.

This sequence belongs to the NmrA-type oxidoreductase family. Isoflavone reductase subfamily. Dimer.

It catalyses the reaction (-)-lariciresinol + NADP(+) = (-)-pinoresinol + NADPH + H(+). It carries out the reaction (+)-secoisolariciresinol + NADP(+) = (-)-lariciresinol + NADPH + H(+). Its function is as follows. Reductase involved in lignan biosynthesis. Catalyzes the enantioselective sequential conversion of (-)-pinoresinol into (-)-lariciresinol and of (-)-lariciresinol into (+)-secoisolariciresinol. Abstracts the 4R-hydride from the NADPH cofactor during catalysis. This chain is Bifunctional pinoresinol-lariciresinol reductase 3, found in Thuja plicata (Western red-cedar).